The primary structure comprises 298 residues: Tyrosine recombinase XerC (298 aa).

The 84-residue stretch at 1 to 84 (MNHIQEAFLN…TLRTFYEYWM (84 aa)) folds into the Core-binding (CB) domain. The 182-residue stretch at 105–286 (YLPQFFYEEE…SNQQLRKVYL (182 aa)) folds into the Tyr recombinase domain. Active-site residues include arginine 145, lysine 169, histidine 238, arginine 241, and histidine 264. Catalysis depends on tyrosine 273, which acts as the O-(3'-phospho-DNA)-tyrosine intermediate.

Belongs to the 'phage' integrase family. XerC subfamily. Forms a cyclic heterotetrameric complex composed of two molecules of XerC and two molecules of XerD.

It is found in the cytoplasm. Functionally, site-specific tyrosine recombinase, which acts by catalyzing the cutting and rejoining of the recombining DNA molecules. The XerC-XerD complex is essential to convert dimers of the bacterial chromosome into monomers to permit their segregation at cell division. It also contributes to the segregational stability of plasmids. This Staphylococcus aureus (strain MRSA252) protein is Tyrosine recombinase XerC.